The chain runs to 203 residues: Large ribosomal subunit protein uL13 (203 aa).

At Ala2 the chain carries N-acetylalanine. Arg59 is modified (citrulline). Position 77 is a phosphoserine; by ZIPK/DAPK3 (Ser77). A Citrulline modification is found at Arg140. Lys191 bears the N6-acetyllysine mark.

The protein belongs to the universal ribosomal protein uL13 family. In terms of assembly, component of the 60S ribosome. Component of the GAIT complex. Interacts with EIF4G1. Post-translationally, phosphorylation at Ser-77 upon interferon-gamma treatment in monocytes involves a DAPK1-DAPK3 kinase cascade and is causing release from the ribosome, association with the GAIT complex and subsequent involvement in transcript-selective translation inhibition. Citrullinated by PADI4.

The protein localises to the cytoplasm. Functionally, associated with ribosomes but is not required for canonical ribosome function and has extra-ribosomal functions. Component of the GAIT (gamma interferon-activated inhibitor of translation) complex which mediates interferon-gamma-induced transcript-selective translation inhibition in inflammation processes. Upon interferon-gamma activation and subsequent phosphorylation dissociates from the ribosome and assembles into the GAIT complex which binds to stem loop-containing GAIT elements in the 3'-UTR of diverse inflammatory mRNAs (such as ceruplasmin) and suppresses their translation. In the GAIT complex interacts with m7G cap-bound eIF4G at or near the eIF3-binding site and blocks the recruitment of the 43S ribosomal complex. Involved in methylation of rRNA. This Homo sapiens (Human) protein is Large ribosomal subunit protein uL13 (RPL13A).